The primary structure comprises 339 residues: Ketol-acid reductoisomerase (NADP(+)) (339 aa).

A KARI N-terminal Rossmann domain is found at 1 to 182; it reads MRVYYDRDAD…GGGRAGIIET (182 aa). NADP(+) is bound by residues 24–27, Arg48, Ser51, Ser53, and 83–86; these read YGSQ and DELQ. Residue His108 is part of the active site. NADP(+) is bound at residue Gly134. Residues 183–328 form the KARI C-terminal knotted domain; the sequence is TFKEECETDL…ERLRAMMPWI (146 aa). Positions 191, 195, 227, and 231 each coordinate Mg(2+). A substrate-binding site is contributed by Ser252.

This sequence belongs to the ketol-acid reductoisomerase family. The cofactor is Mg(2+).

It catalyses the reaction (2R)-2,3-dihydroxy-3-methylbutanoate + NADP(+) = (2S)-2-acetolactate + NADPH + H(+). The catalysed reaction is (2R,3R)-2,3-dihydroxy-3-methylpentanoate + NADP(+) = (S)-2-ethyl-2-hydroxy-3-oxobutanoate + NADPH + H(+). The protein operates within amino-acid biosynthesis; L-isoleucine biosynthesis; L-isoleucine from 2-oxobutanoate: step 2/4. Its pathway is amino-acid biosynthesis; L-valine biosynthesis; L-valine from pyruvate: step 2/4. Involved in the biosynthesis of branched-chain amino acids (BCAA). Catalyzes an alkyl-migration followed by a ketol-acid reduction of (S)-2-acetolactate (S2AL) to yield (R)-2,3-dihydroxy-isovalerate. In the isomerase reaction, S2AL is rearranged via a Mg-dependent methyl migration to produce 3-hydroxy-3-methyl-2-ketobutyrate (HMKB). In the reductase reaction, this 2-ketoacid undergoes a metal-dependent reduction by NADPH to yield (R)-2,3-dihydroxy-isovalerate. This Methylobacterium nodulans (strain LMG 21967 / CNCM I-2342 / ORS 2060) protein is Ketol-acid reductoisomerase (NADP(+)).